The chain runs to 189 residues: Transcription factor FapR (189 aa).

The protein belongs to the FapR family.

In terms of biological role, transcriptional factor involved in regulation of membrane lipid biosynthesis by repressing genes involved in fatty acid and phospholipid metabolism. This Listeria welshimeri serovar 6b (strain ATCC 35897 / DSM 20650 / CCUG 15529 / CIP 8149 / NCTC 11857 / SLCC 5334 / V8) protein is Transcription factor FapR.